Consider the following 288-residue polypeptide: Elongation factor Ts (288 aa).

The tract at residues Thr-79 to Val-82 is involved in Mg(2+) ion dislocation from EF-Tu.

This sequence belongs to the EF-Ts family.

The protein resides in the cytoplasm. In terms of biological role, associates with the EF-Tu.GDP complex and induces the exchange of GDP to GTP. It remains bound to the aminoacyl-tRNA.EF-Tu.GTP complex up to the GTP hydrolysis stage on the ribosome. This Ehrlichia ruminantium (strain Gardel) protein is Elongation factor Ts.